The primary structure comprises 440 residues: ATP-dependent protease ATPase subunit HslU (440 aa).

ATP contacts are provided by residues Ile-18, 60–65, Asp-253, Glu-318, and Arg-390; that span reads GVGKTE.

Belongs to the ClpX chaperone family. HslU subfamily. In terms of assembly, a double ring-shaped homohexamer of HslV is capped on each side by a ring-shaped HslU homohexamer. The assembly of the HslU/HslV complex is dependent on binding of ATP.

Its subcellular location is the cytoplasm. ATPase subunit of a proteasome-like degradation complex; this subunit has chaperone activity. The binding of ATP and its subsequent hydrolysis by HslU are essential for unfolding of protein substrates subsequently hydrolyzed by HslV. HslU recognizes the N-terminal part of its protein substrates and unfolds these before they are guided to HslV for hydrolysis. This chain is ATP-dependent protease ATPase subunit HslU, found in Shewanella oneidensis (strain ATCC 700550 / JCM 31522 / CIP 106686 / LMG 19005 / NCIMB 14063 / MR-1).